Consider the following 257-residue polypeptide: Imidazole glycerol phosphate synthase subunit HisF (257 aa).

Catalysis depends on residues Asp-11 and Asp-130.

The protein belongs to the HisA/HisF family. In terms of assembly, heterodimer of HisH and HisF.

Its subcellular location is the cytoplasm. The catalysed reaction is 5-[(5-phospho-1-deoxy-D-ribulos-1-ylimino)methylamino]-1-(5-phospho-beta-D-ribosyl)imidazole-4-carboxamide + L-glutamine = D-erythro-1-(imidazol-4-yl)glycerol 3-phosphate + 5-amino-1-(5-phospho-beta-D-ribosyl)imidazole-4-carboxamide + L-glutamate + H(+). It participates in amino-acid biosynthesis; L-histidine biosynthesis; L-histidine from 5-phospho-alpha-D-ribose 1-diphosphate: step 5/9. IGPS catalyzes the conversion of PRFAR and glutamine to IGP, AICAR and glutamate. The HisF subunit catalyzes the cyclization activity that produces IGP and AICAR from PRFAR using the ammonia provided by the HisH subunit. The sequence is that of Imidazole glycerol phosphate synthase subunit HisF from Vibrio parahaemolyticus serotype O3:K6 (strain RIMD 2210633).